The following is a 215-amino-acid chain: Interleukin-12 subunit alpha (215 aa).

A signal peptide spans 1–22; sequence MCQSRYLLFLATLALLNHLSLA. 3 disulfide bridges follow: Cys-33–Cys-106, Cys-60–Cys-192, and Cys-81–Cys-119. Asn-89 carries N-linked (GlcNAc...) asparagine glycosylation.

This sequence belongs to the IL-6 superfamily. In terms of assembly, heterodimer with IL12B; disulfide-linked. This heterodimer is known as interleukin IL-12. Heterodimer with EBI3/IL27B; not disulfide-linked. This heterodimer is known as interleukin IL-35. Interacts with NBR1; this interaction promotes IL-12 secretion.

It localises to the secreted. Its function is as follows. Heterodimerizes with IL12B to form the IL-12 cytokine or with EBI3/IL27B to form the IL-35 cytokine. IL-12 is primarily produced by professional antigen-presenting cells (APCs) such as B-cells and dendritic cells (DCs) as well as macrophages and granulocytes and regulates T-cell and natural killer-cell responses, induces the production of interferon-gamma (IFN-gamma), favors the differentiation of T-helper 1 (Th1) cells and is an important link between innate resistance and adaptive immunity. Mechanistically, exerts its biological effects through a receptor composed of IL12R1 and IL12R2 subunits. Binding to the receptor results in the rapid tyrosine phosphorylation of a number of cellular substrates including the JAK family kinases TYK2 and JAK2. In turn, recruited STAT4 gets phosphorylated and translocates to the nucleus where it regulates cytokine/growth factor responsive genes. As part of IL-35, plays essential roles in maintaining the immune homeostasis of the liver microenvironment and also functions as an immune-suppressive cytokine. Mediates biological events through unconventional receptors composed of IL12RB2 and gp130/IL6ST heterodimers or homodimers. Signaling requires the transcription factors STAT1 and STAT4, which form a unique heterodimer that binds to distinct DNA sites. This is Interleukin-12 subunit alpha (Il12a) from Mus musculus (Mouse).